Consider the following 94-residue polypeptide: Protein EGG APPARATUS-1 (94 aa).

Over 1–15 (MSSCPAIVNMKDDDG) the chain is Cytoplasmic. A helical; Signal-anchor for type II membrane protein membrane pass occupies residues 16–36 (IGAMGAAVAFAAMGVFGIYFL). Topologically, residues 37–94 (WPVVGPTSAGMMMKAPGAAGWVICRAVFEANPQLYFTILRTAGAAAAAATFAACSIAS) are extracellular.

Possible proteolysis of the C-terminal region from the predicted transmembrane domain to permit secretion and transport of the mature protein to the cell walls of the nucellus, allowing the spreading from the egg cell apparatus to the micropylar opening of the ovule. In terms of tissue distribution, expressed only in the egg apparatus, consisting of the egg cell and two synergids. Not detected in the central cell, antipodals, and nucellar and integumental cells.

Its subcellular location is the membrane. In terms of biological role, involved in short-range signaling required for pollen tube attraction by the female gametophyte. Required for female fertility. This Zea mays (Maize) protein is Protein EGG APPARATUS-1 (Ea1).